We begin with the raw amino-acid sequence, 105 residues long: DNA-directed RNA polymerase subunit omega (105 aa).

Belongs to the RNA polymerase subunit omega family. As to quaternary structure, the RNAP catalytic core consists of 2 alpha, 1 beta, 1 beta' and 1 omega subunit. When a sigma factor is associated with the core the holoenzyme is formed, which can initiate transcription.

The enzyme catalyses RNA(n) + a ribonucleoside 5'-triphosphate = RNA(n+1) + diphosphate. In terms of biological role, promotes RNA polymerase assembly. Latches the N- and C-terminal regions of the beta' subunit thereby facilitating its interaction with the beta and alpha subunits. The sequence is that of DNA-directed RNA polymerase subunit omega from Streptococcus uberis (strain ATCC BAA-854 / 0140J).